A 701-amino-acid polypeptide reads, in one-letter code: Methionine--tRNA ligase (701 aa).

The short motif at Pro-13–His-23 is the 'HIGH' region element. Zn(2+)-binding residues include Cys-144, Cys-147, Cys-157, and Cys-160. The 'KMSKS' region signature appears at Lys-336–Ser-340. Residue Lys-339 participates in ATP binding. Residues Asp-600–Lys-701 enclose the tRNA-binding domain.

This sequence belongs to the class-I aminoacyl-tRNA synthetase family. MetG type 1 subfamily. As to quaternary structure, homodimer. Zn(2+) is required as a cofactor.

The protein localises to the cytoplasm. The catalysed reaction is tRNA(Met) + L-methionine + ATP = L-methionyl-tRNA(Met) + AMP + diphosphate. Is required not only for elongation of protein synthesis but also for the initiation of all mRNA translation through initiator tRNA(fMet) aminoacylation. This is Methionine--tRNA ligase from Nitrosomonas eutropha (strain DSM 101675 / C91 / Nm57).